The following is a 355-amino-acid chain: Protein RecA (355 aa).

65–72 (GPESSGKT) serves as a coordination point for ATP.

It belongs to the RecA family.

It localises to the cytoplasm. Functionally, can catalyze the hydrolysis of ATP in the presence of single-stranded DNA, the ATP-dependent uptake of single-stranded DNA by duplex DNA, and the ATP-dependent hybridization of homologous single-stranded DNAs. It interacts with LexA causing its activation and leading to its autocatalytic cleavage. This is Protein RecA from Pseudomonas putida (strain W619).